The primary structure comprises 285 residues: Secreted LysM effector slp2 (285 aa).

The signal sequence occupies residues 1-16 (MLPITVVTLFAALAAA). The disordered stretch occupies residues 75 to 143 (GDAAKAGDAA…KGGDAAKGGN (69 aa)). The span at 85–116 (KGGDAKGGDAKGGDAKGGDAKGGKGGDAKGGK) shows a compositional bias: basic and acidic residues. Over residues 117–139 (GGDAAKGGKGGDAAKGGKGGDAA) the composition is skewed to gly residues. 2 LysM domains span residues 157 to 201 (VEHK…VLKI) and 237 to 281 (FTRV…TINL).

It belongs to the secreted LysM effector family.

Functionally, might have a role in sequestration of chitin oligosaccharides (breakdown products of fungal cell walls that are released during invasion and act as triggers of host immunity) to dampen host defense. The protein is Secreted LysM effector slp2 of Pyricularia oryzae (strain 70-15 / ATCC MYA-4617 / FGSC 8958) (Rice blast fungus).